We begin with the raw amino-acid sequence, 325 residues long: Coiled-coil domain-containing protein 130 homolog (325 aa).

A coiled-coil region spans residues 156-262 (LKLENKKLDI…KLKRELIKNE (107 aa)).

This sequence belongs to the CWC16 family.

The protein is Coiled-coil domain-containing protein 130 homolog of Dictyostelium discoideum (Social amoeba).